The following is a 269-amino-acid chain: Small ribosomal subunit protein uS2 (269 aa).

The tract at residues 228 to 269 (QLDSDDDYEEFDESLAEGDYDDYDEEEDEDSETVSSQEGEEE) is disordered. Residues 230–269 (DSDDDYEEFDESLAEGDYDDYDEEEDEDSETVSSQEGEEE) show a composition bias toward acidic residues.

The protein belongs to the universal ribosomal protein uS2 family.

This chain is Small ribosomal subunit protein uS2, found in Crocosphaera subtropica (strain ATCC 51142 / BH68) (Cyanothece sp. (strain ATCC 51142)).